Reading from the N-terminus, the 459-residue chain is Cyclin-dependent kinase F-4 (459 aa).

The region spanning Phe-4–Phe-283 is the Protein kinase domain. Residues Val-10 to Val-18 and Lys-33 each bind ATP. Residue Asp-125 is the Proton acceptor of the active site. Position 151 is a phosphoserine (Ser-151). A Phosphothreonine modification is found at Thr-156. The segment at Lys-310–Gly-397 is disordered. Polar residues-rich tracts occupy residues Ser-322–Gly-346 and Glu-366–Arg-375.

The protein belongs to the protein kinase superfamily. CMGC Ser/Thr protein kinase family. CDC2/CDKX subfamily.

It catalyses the reaction L-seryl-[protein] + ATP = O-phospho-L-seryl-[protein] + ADP + H(+). The catalysed reaction is L-threonyl-[protein] + ATP = O-phospho-L-threonyl-[protein] + ADP + H(+). It carries out the reaction [DNA-directed RNA polymerase] + ATP = phospho-[DNA-directed RNA polymerase] + ADP + H(+). This Oryza sativa subsp. japonica (Rice) protein is Cyclin-dependent kinase F-4 (CDKF-4).